Consider the following 83-residue polypeptide: Large ribosomal subunit protein bL31B (83 aa).

Belongs to the bacterial ribosomal protein bL31 family. Type B subfamily. In terms of assembly, part of the 50S ribosomal subunit.

The chain is Large ribosomal subunit protein bL31B from Lactobacillus johnsonii (strain CNCM I-12250 / La1 / NCC 533).